A 133-amino-acid chain; its full sequence is Ribosome-binding factor A (133 aa).

This sequence belongs to the RbfA family. Monomer. Binds 30S ribosomal subunits, but not 50S ribosomal subunits or 70S ribosomes.

It is found in the cytoplasm. One of several proteins that assist in the late maturation steps of the functional core of the 30S ribosomal subunit. Associates with free 30S ribosomal subunits (but not with 30S subunits that are part of 70S ribosomes or polysomes). Required for efficient processing of 16S rRNA. May interact with the 5'-terminal helix region of 16S rRNA. The chain is Ribosome-binding factor A from Acinetobacter baumannii (strain ACICU).